The chain runs to 83 residues: MSSAIKILALLMVLVALAQAKPRKDYRAYPDFDDKSVILEDDKRCDPDKRDSVCKDVCGMLDIGTENGECPGKEVCCVDLFGR.

Residues methionine 1–alanine 20 form the signal peptide. Residues lysine 21 to arginine 44 constitute a propeptide that is removed on maturation. A Phenylalanine amide modification is found at phenylalanine 81.

Post-translationally, contains 3 disulfide bonds.

It localises to the secreted. The protein localises to the nematocyst. Its function is as follows. In vivo, induces immediate paralysis on shrimps (C.multidentata), followed by death when high doses are injected. No activity is observed when injected into fly larvae (M.domestica). The sequence is that of Toxin CjTL8 from Epiactis japonica (Sea anemone).